The primary structure comprises 469 residues: 6-phospho-beta-galactosidase (469 aa).

The D-galactose 6-phosphate site is built by glutamine 19, histidine 116, asparagine 159, glutamate 160, and asparagine 297. The active-site Proton donor is glutamate 160. Catalysis depends on glutamate 375, which acts as the Nucleophile. The D-galactose 6-phosphate site is built by serine 428, tryptophan 429, lysine 435, and tyrosine 437.

The protein belongs to the glycosyl hydrolase 1 family.

The catalysed reaction is a 6-phospho-beta-D-galactoside + H2O = D-galactose 6-phosphate + an alcohol. It participates in carbohydrate metabolism; lactose degradation; D-galactose 6-phosphate and beta-D-glucose from lactose 6-phosphate: step 1/1. The sequence is that of 6-phospho-beta-galactosidase from Streptococcus equi subsp. zooepidemicus (strain H70).